The following is a 1010-amino-acid chain: Importin-8 (1010 aa).

The Importin N-terminal domain occupies 22–102 (AETELNQSYK…RDNIVEGIIR (81 aa)). The span at 886 to 895 (NHSKAEKVDI) shows a compositional bias: basic and acidic residues. The interval 886–932 (NHSKAEKVDIEENEEISSEEEEETSVSAQAMQSQIGRSEEEDDDDWD) is disordered. The span at 896–909 (EENEEISSEEEEET) shows a compositional bias: acidic residues. Residues Ser-902 and Ser-903 each carry the phosphoserine modification. Polar residues predominate over residues 910–921 (SVSAQAMQSQIG).

The protein belongs to the importin beta family. In terms of assembly, forms a heterodimer with KPNB1. Interacts with SRP19. Interacts with RPL23A. Binds directly to nuclear pore complexes. Interacts with LRPPRC; the interaction occurs when LRPPRC is in its RNA-free form and promotes import of LRPPRC to the nucleus to allow for EIF4E-mediated export of mRNAS from the nucleus to the cytoplasm.

The protein resides in the cytoplasm. Its subcellular location is the nucleus. Involved in nuclear protein import, either by acting as autonomous nuclear transport receptor or as an adapter-like protein in association with the importin-beta subunit KPNB1. Acting autonomously, may serve as receptor for nuclear localization signals (NLS) and promote translocation of import substrates through the nuclear pore complex (NPC) by an energy requiring, Ran-dependent mechanism. At the nucleoplasmic side of the NPC, Ran binds to importin, the importin/substrate complex dissociates and importin is re-exported from the nucleus to the cytoplasm where GTP hydrolysis releases Ran. The directionality of nuclear import is thought to be conferred by an asymmetric distribution of the GTP- and GDP-bound forms of Ran between the cytoplasm and nucleus. In vitro mediates the nuclear import of the signal recognition particle protein SRP19. May also be involved in cytoplasm-to-nucleus shuttling of a broad spectrum of other cargos, including Argonaute-microRNAs complexes, the JUN protein, RELA/NF-kappa-B p65 subunit, the translation initiation factor EIF4E and a set of receptor-activated mothers against decapentaplegic homolog (SMAD) transcription factors that play a critical role downstream of the large family of transforming growth factor beta and bone morphogenetic protein (BMP) cytokines. This Mus musculus (Mouse) protein is Importin-8.